The following is a 66-amino-acid chain: Probable cytochrome b-c1 complex subunit 9 (66 aa).

Topologically, residues 1-20 are mitochondrial matrix; sequence MSNALTNIFYKYVARRNSTW. Residues 21–46 traverse the membrane as a helical segment; it reads MAGAILGAFVLDSTVSGAVNTFFDSV. The Mitochondrial intermembrane segment spans residues 47–66; the sequence is NKGKLWKDVYAERVKKGISQ.

This sequence belongs to the UQCR10/QCR9 family. As to quaternary structure, component of the ubiquinol-cytochrome c oxidoreductase (cytochrome b-c1 complex, complex III, CIII), a multisubunit enzyme composed of 3 respiratory subunits cytochrome b, cytochrome c1 and Rieske protein, 2 core protein subunits, and additional low-molecular weight protein subunits. The complex exists as an obligatory dimer and forms supercomplexes (SCs) in the inner mitochondrial membrane with cytochrome c oxidase (complex IV, CIV).

The protein resides in the mitochondrion inner membrane. In terms of biological role, component of the ubiquinol-cytochrome c oxidoreductase, a multisubunit transmembrane complex that is part of the mitochondrial electron transport chain which drives oxidative phosphorylation. The respiratory chain contains 3 multisubunit complexes succinate dehydrogenase (complex II, CII), ubiquinol-cytochrome c oxidoreductase (cytochrome b-c1 complex, complex III, CIII) and cytochrome c oxidase (complex IV, CIV), that cooperate to transfer electrons derived from NADH and succinate to molecular oxygen, creating an electrochemical gradient over the inner membrane that drives transmembrane transport and the ATP synthase. The cytochrome b-c1 complex catalyzes electron transfer from ubiquinol to cytochrome c, linking this redox reaction to translocation of protons across the mitochondrial inner membrane, with protons being carried across the membrane as hydrogens on the quinol. In the process called Q cycle, 2 protons are consumed from the matrix, 4 protons are released into the intermembrane space and 2 electrons are passed to cytochrome c. The chain is Probable cytochrome b-c1 complex subunit 9 from Dictyostelium discoideum (Social amoeba).